Consider the following 159-residue polypeptide: Protein-export protein SecB (159 aa).

The protein belongs to the SecB family. As to quaternary structure, homotetramer, a dimer of dimers. One homotetramer interacts with 1 SecA dimer.

It localises to the cytoplasm. Its function is as follows. One of the proteins required for the normal export of preproteins out of the cell cytoplasm. It is a molecular chaperone that binds to a subset of precursor proteins, maintaining them in a translocation-competent state. It also specifically binds to its receptor SecA. In Hahella chejuensis (strain KCTC 2396), this protein is Protein-export protein SecB.